The chain runs to 292 residues: Ribonuclease HIII (292 aa).

The 217-residue stretch at 76 to 292 (TNLIGTDEVG…TQKAMKIAQL (217 aa)) folds into the RNase H type-2 domain. A divalent metal cation-binding residues include Asp-82, Glu-83, and Asp-186.

Belongs to the RNase HII family. RnhC subfamily. Mn(2+) serves as cofactor. Mg(2+) is required as a cofactor.

It localises to the cytoplasm. It catalyses the reaction Endonucleolytic cleavage to 5'-phosphomonoester.. Functionally, endonuclease that specifically degrades the RNA of RNA-DNA hybrids. This is Ribonuclease HIII from Lactococcus lactis subsp. cremoris (strain SK11).